The sequence spans 950 residues: Protein translocase subunit SecA (950 aa).

ATP is bound by residues Gln87, 105 to 109, and Asp524; that span reads GEGKT. Residues 908–932 are disordered; sequence GAAPVPAEARNPNDPSTWGKVGRNE. Residues Cys934, Cys936, Cys945, and His946 each contribute to the Zn(2+) site.

The protein belongs to the SecA family. As to quaternary structure, monomer and homodimer. Part of the essential Sec protein translocation apparatus which comprises SecA, SecYEG and auxiliary proteins SecDF-YajC and YidC. Zn(2+) is required as a cofactor.

It localises to the cell inner membrane. The protein resides in the cytoplasm. It carries out the reaction ATP + H2O + cellular proteinSide 1 = ADP + phosphate + cellular proteinSide 2.. Functionally, part of the Sec protein translocase complex. Interacts with the SecYEG preprotein conducting channel. Has a central role in coupling the hydrolysis of ATP to the transfer of proteins into and across the cell membrane, serving both as a receptor for the preprotein-SecB complex and as an ATP-driven molecular motor driving the stepwise translocation of polypeptide chains across the membrane. This Bradyrhizobium sp. (strain BTAi1 / ATCC BAA-1182) protein is Protein translocase subunit SecA.